The sequence spans 218 residues: MINLILLGLPGAGKGTASERIVDKYHLTHISTGDMFREAMANKTKVGLEAKSYIDKGNLVPDEVTARLVEERLSQPDIKEGYILDGFPRTTVQAELLEGITKRLKKPLTNVIALEVDEDTLIKRLSARYMCKNCGATYNKISKQPKVEGTCDRCGSHEFYQREDDKPEVVKNRLEVNEKMNAPLKDFYQKKGLLTIINGEQTPEKVFEDIDAVLSNNQ.

An ATP-binding site is contributed by 11–16 (GAGKGT). Residues 31–60 (STGDMFREAMANKTKVGLEAKSYIDKGNLV) form an NMP region. AMP-binding positions include threonine 32, arginine 37, 58 to 60 (NLV), 86 to 89 (GFPR), and glutamine 93. The segment at 127–165 (ARYMCKNCGATYNKISKQPKVEGTCDRCGSHEFYQREDD) is LID. ATP is bound at residue arginine 128. Zn(2+) is bound by residues cysteine 131 and cysteine 134. 137–138 (TY) serves as a coordination point for ATP. Residues cysteine 151 and cysteine 154 each coordinate Zn(2+). Residues arginine 162 and arginine 173 each contribute to the AMP site. Glutamine 201 lines the ATP pocket.

This sequence belongs to the adenylate kinase family. Monomer.

The protein resides in the cytoplasm. It catalyses the reaction AMP + ATP = 2 ADP. It functions in the pathway purine metabolism; AMP biosynthesis via salvage pathway; AMP from ADP: step 1/1. Functionally, catalyzes the reversible transfer of the terminal phosphate group between ATP and AMP. Plays an important role in cellular energy homeostasis and in adenine nucleotide metabolism. The chain is Adenylate kinase from Lactobacillus acidophilus (strain ATCC 700396 / NCK56 / N2 / NCFM).